Consider the following 436-residue polypeptide: Prenyltransferase nscD (436 aa).

Belongs to the tryptophan dimethylallyltransferase family.

It participates in secondary metabolite biosynthesis. Functionally, prenyltransferase; part of the gene cluster that mediates the biosynthesis of neosartoricin B, a prenylated anthracenone that probably exhibits T-cell antiproliferative activity, suggestive of a physiological role as an immunosuppressive agent. The non-reducing polyketide synthase nscA probably synthesizes and cyclizes the decaketide backbone. The hydrolase nscB then mediates the product release through hydrolysis followed by spontaneous decarboxylation. The prenyltransferase nscD catalyzes the addition of the dimethylallyl group to the aromatic C5. The FAD-dependent monooxygenase nscC is then responsible for the stereospecific hydroxylation at C2. Neosartoricin B can be converted into two additional compounds neosartoricins C and D. Neosartoricin C is a spirocyclic compound that is cyclized through the attack of C3 hydroxyl on C14, followed by dehydration. On the other hand, neosartoricin D is a further cyclized compound in which attack of C2 on C14 in neosartoricin C results in the formation of the acetal-containing dioxabicyclo-octanone ring. Both of these compounds are novel and possibly represent related metabolites of the gene cluster. The protein is Prenyltransferase nscD of Arthroderma otae (strain ATCC MYA-4605 / CBS 113480) (Microsporum canis).